We begin with the raw amino-acid sequence, 154 residues long: Aspartate carbamoyltransferase regulatory chain (154 aa).

C109, C114, C138, and C141 together coordinate Zn(2+).

This sequence belongs to the PyrI family. As to quaternary structure, contains catalytic and regulatory chains. Zn(2+) is required as a cofactor.

In terms of biological role, involved in allosteric regulation of aspartate carbamoyltransferase. This chain is Aspartate carbamoyltransferase regulatory chain, found in Yersinia enterocolitica serotype O:8 / biotype 1B (strain NCTC 13174 / 8081).